The chain runs to 203 residues: Small ribosomal subunit protein uS4 (203 aa).

Positions Arg93–Val156 constitute an S4 RNA-binding domain.

It belongs to the universal ribosomal protein uS4 family. Part of the 30S ribosomal subunit. Contacts protein S5. The interaction surface between S4 and S5 is involved in control of translational fidelity.

One of the primary rRNA binding proteins, it binds directly to 16S rRNA where it nucleates assembly of the body of the 30S subunit. Functionally, with S5 and S12 plays an important role in translational accuracy. This chain is Small ribosomal subunit protein uS4, found in Streptococcus equi subsp. equi (strain 4047).